The chain runs to 355 residues: tRNA (guanine-N(1)-)-methyltransferase (355 aa).

S-adenosyl-L-methionine-binding positions include G109 and 129–134; that span reads IGDYVL.

This sequence belongs to the RNA methyltransferase TrmD family. In terms of assembly, homodimer.

It localises to the cytoplasm. It carries out the reaction guanosine(37) in tRNA + S-adenosyl-L-methionine = N(1)-methylguanosine(37) in tRNA + S-adenosyl-L-homocysteine + H(+). Specifically methylates guanosine-37 in various tRNAs. The sequence is that of tRNA (guanine-N(1)-)-methyltransferase from Chlamydia abortus (strain DSM 27085 / S26/3) (Chlamydophila abortus).